A 902-amino-acid polypeptide reads, in one-letter code: Methionine--tRNA ligase, cytoplasmic (902 aa).

In terms of domain architecture, GST C-terminal spans 74–212 (GWEQDDLTNQ…QKQPQPQPPP (139 aa)). The 'HIGH' region signature appears at 275-285 (PYVNNVPHLGN). A 'KMSKS' region motif is present at residues 595 to 599 (KFSKS). Lysine 598 contacts ATP. A Phosphoserine modification is found at serine 827. Position 837 is a phosphothreonine (threonine 837). In terms of domain architecture, WHEP-TRS spans 843 to 899 (HIQTLTDEVTKQGNVVRELKAQKADKNQVAAEVAKLLDLKKQLALAEGKPIETPKGK).

This sequence belongs to the class-I aminoacyl-tRNA synthetase family. Monomer. Part of a multisubunit complex that groups tRNA ligases for Arg (RARS1), Asp (DARS1), Gln (QARS1), Ile (IARS1), Leu (LARS1), Lys (KARS1), Met (MARS1) the bifunctional ligase for Glu and Pro (EPRS1) and the auxiliary subunits AIMP1/p43, AIMP2/p38 and EEF1E1/p18. Forms a linear complex that contains MARS1, EEF1E1, EPRS1 and AIMP2 that is at the core of the multisubunit complex.

The protein resides in the cytoplasm. It localises to the cytosol. The protein localises to the nucleus. Its subcellular location is the nucleolus. The catalysed reaction is tRNA(Met) + L-methionine + ATP = L-methionyl-tRNA(Met) + AMP + diphosphate. Catalyzes the specific attachment of an amino acid to its cognate tRNA in a 2 step reaction: the amino acid (AA) is first activated by ATP to form AA-AMP and then transferred to the acceptor end of the tRNA. Plays a role in the synthesis of ribosomal RNA in the nucleolus. The sequence is that of Methionine--tRNA ligase, cytoplasmic (Mars1) from Mus musculus (Mouse).